Here is a 118-residue protein sequence, read N- to C-terminus: Nucleoid-associated protein TM_0687 (118 aa).

It belongs to the YbaB/EbfC family. Homodimer.

The protein localises to the cytoplasm. The protein resides in the nucleoid. Binds to DNA and alters its conformation. May be involved in regulation of gene expression, nucleoid organization and DNA protection. This chain is Nucleoid-associated protein TM_0687, found in Thermotoga maritima (strain ATCC 43589 / DSM 3109 / JCM 10099 / NBRC 100826 / MSB8).